Consider the following 705-residue polypeptide: Polyribonucleotide nucleotidyltransferase (705 aa).

Mg(2+) is bound by residues aspartate 486 and aspartate 492. Positions 553 to 612 (PRIYKIKINPEKIKDVIGKGGSVIRMLTEKTKSSIEIEDDGTVKVISTDIKNAQCALKKI) constitute a KH domain. An S1 motif domain is found at 622–690 (NKIYVAKITR…RYGRIRLSFT (69 aa)).

Belongs to the polyribonucleotide nucleotidyltransferase family. Component of the RNA degradosome, which is a multiprotein complex involved in RNA processing and mRNA degradation. It depends on Mg(2+) as a cofactor.

The protein resides in the cytoplasm. The enzyme catalyses RNA(n+1) + phosphate = RNA(n) + a ribonucleoside 5'-diphosphate. Involved in mRNA degradation. Catalyzes the phosphorolysis of single-stranded polyribonucleotides processively in the 3'- to 5'-direction. This Wigglesworthia glossinidia brevipalpis protein is Polyribonucleotide nucleotidyltransferase.